Reading from the N-terminus, the 245-residue chain is 5-oxoprolinase subunit A (245 aa).

Belongs to the LamB/PxpA family. In terms of assembly, forms a complex composed of PxpA, PxpB and PxpC.

The enzyme catalyses 5-oxo-L-proline + ATP + 2 H2O = L-glutamate + ADP + phosphate + H(+). In terms of biological role, catalyzes the cleavage of 5-oxoproline to form L-glutamate coupled to the hydrolysis of ATP to ADP and inorganic phosphate. The protein is 5-oxoprolinase subunit A of Yersinia pseudotuberculosis serotype O:1b (strain IP 31758).